The sequence spans 165 residues: UPF0114 protein in repA1-repA2 intergenic region (165 aa).

Transmembrane regions (helical) follow at residues leucine 15–phenylalanine 35, leucine 53–valine 73, and isoleucine 136–isoleucine 156.

The protein belongs to the UPF0114 family.

It localises to the cell membrane. The protein is UPF0114 protein in repA1-repA2 intergenic region of Buchnera aphidicola subsp. Thelaxes suberi.